Reading from the N-terminus, the 319-residue chain is Tyrosine phosphatase-like protein N3 (319 aa).

A Tyrosine-protein phosphatase domain is found at S7–S285.

It belongs to the protein-tyrosine phosphatase family.

This is Tyrosine phosphatase-like protein N3 (N7) from Microplitis demolitor bracovirus (isolate Webb) (MdBV).